A 299-amino-acid chain; its full sequence is tRNA uridine(34) hydroxylase (299 aa).

The Rhodanese domain maps to 132-226 (AGRPVVMLDT…YFEEVGGAHY (95 aa)). Cysteine 186 functions as the Cysteine persulfide intermediate in the catalytic mechanism.

This sequence belongs to the TrhO family.

The enzyme catalyses uridine(34) in tRNA + AH2 + O2 = 5-hydroxyuridine(34) in tRNA + A + H2O. In terms of biological role, catalyzes oxygen-dependent 5-hydroxyuridine (ho5U) modification at position 34 in tRNAs. This Burkholderia pseudomallei (strain 1106a) protein is tRNA uridine(34) hydroxylase.